The primary structure comprises 139 residues: Protein shisa-5 (139 aa).

A helical membrane pass occupies residues 3–23; it reads FGTLVAIGVIVFAVVVITIIL.

Belongs to the shisa family.

It localises to the endoplasmic reticulum membrane. It is found in the nucleus membrane. In terms of biological role, can induce apoptosis in a caspase-dependent manner and plays a role in p53/TP53-dependent apoptosis. The protein is Protein shisa-5 (Shisa5) of Gallus gallus (Chicken).